The following is a 93-amino-acid chain: Cobalt transport protein CbiN (93 aa).

Helical transmembrane passes span 5–25 and 63–83; these read LILLAMVVALMILPFFINHGG and LLFTLQGSLGAAVIFYILGYA.

This sequence belongs to the CbiN family. In terms of assembly, forms an energy-coupling factor (ECF) transporter complex composed of an ATP-binding protein (A component, CbiO), a transmembrane protein (T component, CbiQ) and 2 possible substrate-capture proteins (S components, CbiM and CbiN) of unknown stoichimetry.

Its subcellular location is the cell inner membrane. The protein operates within cofactor biosynthesis; adenosylcobalamin biosynthesis. Its function is as follows. Part of the energy-coupling factor (ECF) transporter complex CbiMNOQ involved in cobalt import. In Klebsiella pneumoniae (strain 342), this protein is Cobalt transport protein CbiN.